Consider the following 242-residue polypeptide: Tropomyosin-1 (242 aa).

Disordered stretches follow at residues 1-31 (MDAI…ELTA) and 65-96 (TSLT…QTDY). A coiled-coil region spans residues 1–242 (MDAIKKKMSA…DELLLELASM (242 aa)). 2 stretches are compositionally biased toward basic and acidic residues: residues 13–23 (TKLEEADKQAQ) and 70–96 (KYNE…QTDY).

It belongs to the tropomyosin family. In terms of assembly, homodimer. Expressed ubiquitously.

The polypeptide is Tropomyosin-1 (TPM1) (Podocoryna carnea (Hydrozoan)).